The primary structure comprises 150 residues: Ribosome maturation factor RimP (150 aa).

The protein belongs to the RimP family.

The protein resides in the cytoplasm. Functionally, required for maturation of 30S ribosomal subunits. The polypeptide is Ribosome maturation factor RimP (Acaryochloris marina (strain MBIC 11017)).